A 383-amino-acid polypeptide reads, in one-letter code: Galactokinase (383 aa).

Residue Glu34–Asp37 participates in substrate binding. Gly124–Ser130 serves as a coordination point for ATP. 2 residues coordinate Mg(2+): Ser130 and Glu162. The active-site Proton acceptor is the Asp174. Substrate is bound at residue Tyr223.

This sequence belongs to the GHMP kinase family. GalK subfamily.

Its subcellular location is the cytoplasm. The catalysed reaction is alpha-D-galactose + ATP = alpha-D-galactose 1-phosphate + ADP + H(+). It participates in carbohydrate metabolism; galactose metabolism. In terms of biological role, catalyzes the transfer of the gamma-phosphate of ATP to D-galactose to form alpha-D-galactose-1-phosphate (Gal-1-P). The polypeptide is Galactokinase (Yersinia pseudotuberculosis serotype O:1b (strain IP 31758)).